Here is a 311-residue protein sequence, read N- to C-terminus: Methionyl-tRNA formyltransferase (311 aa).

110–113 is a binding site for (6S)-5,6,7,8-tetrahydrofolate; the sequence is SLLP.

The protein belongs to the Fmt family.

It catalyses the reaction L-methionyl-tRNA(fMet) + (6R)-10-formyltetrahydrofolate = N-formyl-L-methionyl-tRNA(fMet) + (6S)-5,6,7,8-tetrahydrofolate + H(+). In terms of biological role, attaches a formyl group to the free amino group of methionyl-tRNA(fMet). The formyl group appears to play a dual role in the initiator identity of N-formylmethionyl-tRNA by promoting its recognition by IF2 and preventing the misappropriation of this tRNA by the elongation apparatus. In Streptococcus gordonii (strain Challis / ATCC 35105 / BCRC 15272 / CH1 / DL1 / V288), this protein is Methionyl-tRNA formyltransferase.